The following is a 2883-amino-acid chain: MPTTLKSGNRLRVDFTKIPQNIAIPNLLQLQRNSYDSFLMPIENGESGIEKVFRSIFPIHDAQNRITLEYAGCEYGKPRYTVREAMERGLTYSVPLKVKIRLVLWEKDEKTGEKLGVKDIKEQSIFVREIPLMTDRTSFIINGVERVVVNQLHRSPGVIFKEEESATSSNKLIYTGQIIPDRGSWLYFEYDAKDTLYVRINKRRKVPVTILFRALGYSKQDVIKTFYPLMKVKAEAGKYLMPFNPEEFIGRIEFDIRDTSGNLIIGAGKRLTQKRAKTLKEQGLEWVEYPVEILLDRHLAEPIVDKESGEVILDTLVQLDEGKLKKIHELGIKEFTIANDLAQGVDASIIHSFVADNESLKLLKQTEKIDDDNDLAAIRIYKVMRPGEPVTKDAAKSFVQQLFFDPERYDLTRVGRMKMNHKLDIEVPDYVTVLTHEDIICTVKYLIRVKNGQGHIDDRDHLGNRRIRAIGELLANELHTGLVKMQKAIRDKLTTMSGNLDELMPHDLVNSKMITSTILEFFTGGQLSQFMDQTNPLSEVTHKRRLSALGEGGLVKERAGFEVRDVHPTHYGRICPIETPEGQNIGLINTLSTYSKVNDLGFIEAPYKKVIEGKVTDEVVYLTATQEEGLVIAPASTVLETDGAIKEDLIETRIDGEIVLSEKSKVDLIDLSPGMVVGVAASLIPFLEHDDANRALMGSNMQRQAVPLLNPDAPVVGTGMEKTVARDSWEAIKATRGGIVEKVDAKNIYILGEDENGAYIDHYSLQKNLRTNQNTCFSQAPIVHEGETIEAGQVIADGPNMDKGELALGKNIRVAFMPWNGYNFEDAIVVSEKLIREDTFTSIHIYEKEIEARELKHGVEEITRDIPNVREEELAHLDESGIVKIGTFVNAGMILVGKVSPKGEVKPTPEERLLRAIFGEKAGHVVNKSLYCPPSLEGTVVDVKIFTKKGYDKDQRAIAAYEEEKARLDLEHHDKLMMLDREEMLRLTSMLSKEPLASDVVVNEKSYKKGELIEKGDLAKINRFAMNALVKSFPKSIQEAYDQLKSNFLEQKKNLSEEHEEKLSVLEKDDILPSGVVKLVKIYVATKRKLKVGDKMAGRHGNKGIVSNIVREIDMPYTKDGEPVEIVLNPLGVPSRMNIGQILEVHLGLVGKKLGAQINEMFENQTKDWMGALRAKIIEIAQVSKMTGVDEFVSSLSDEALLSYARDWRRGVKFATPVFEGVNEEEFTKLFELARIDTDGKTELYDGKTGAKMKERVNVGYMYMLKLHHLVDEKVHARSTGPYSLVTQQPVGGKALFGGQRFGEMEVWALEAYGAAHTLKEMLTVKSDDVEGRVKAYKAITRGEPVKESEIPETFYVLTKELQSLALDVTVYGETEEDSFVPMPIKEDDRPSDFNAFQLMLASPDKIMSWSNGEVKKPETINYRTLKPERDGLFCAKIFGPVRDYECLCGKYKKMRYKGVVCEKCGVEVTSSKVRRSRMGHIELVTPVAHIWYVNSLPSRIGTLLGVKMKDLERVLYYEAYIVKTPGEAFYDNEGTKPVAKYDVLNEEQYQSLNQRFEHTGFVAQMGGEAVKELLAQIDLVELLHTLREEIKATNSEAKKKTIIKRLKVVESFINSGNRPEWMMLTVLPVLPPDLRPLVALDGGKFAVSDVNDLYRRVINRNQRLKRLMELDAPEIIIRNEKRMLQEAVDALFDNGRNANAVKGANKRPLKSLSEIIKGKQGRFRQNLLGKRVDFSGRSVIVVGPNLRMDQCGLPKGMALELFKPHILAKLEEKGYATTLKQAKKMIEQKTNEVWECLQEIVEGYPIMLNRAPTLHKQSIQAFHPKLIDGKAIQLHPLVCSAFNADFDGDQMAVHVPLSQEAITECKLLMLSSMNILLPASGKAVTVPSQDMVLGLYYLSLAKEGSRGEHKLFSNVDEIMIALDADAVEINTKIRTIVDRRPLYTTVGRMIIKSILPDFVPVSLWNKVLKKKDIAALIDHVYKEGGLGITARFLDNLKDLGFKYATTAGISISSDDIRVPDIKRKTVEAAKKKVKEIQAQFGAGLLTEQERYNKIIDVWTDTNNGLGSEMMKLVQADKGGFNSIYMMADSGARGSAAQIRQLSAMRGLMAKPDGTIIETPIISNFKEGLNVLEYFISTHGARKGLADTALKTANAGYLTRKLIDVSQNVKIVMEDCGTHEGVEITDIAIGSELIEPLEERIFGRVVAEDVIDPITNEILVSEGSLIDEEMAKKIKEAGVKAVIIRTPVTCKAEKGVCSKCYGLNLGEGKVTNPGEAVGVVAAQSIGEPGTQLTLRTFHIGGTASRSQEERQVVVEKEGFIRYYNIKTYKNKEGKTVVANRRNAAVLLVEPKIKAPFEGELRVDTAHEEMVISVIGKSETVRYSLRKSDVAKPNELAGVTGKIEGKFYIPYGSGTKVREDGSIVEIIKDGWNIPNRIPYASELKVEDNAPITQKIFSKEKGIVKYYRLKGDHLERYKEITKGEKVTEKGIFAVIADTNDREAIRHYIARGSIIELADGAEVKPDSLVASPASSEQIVIADWDPYSNPIIAEEAGVVKYEDIIPGVTVTEQVDELTGQSRLVVNEYLPTSFKPTIVVASAAGNLIRYALDSKTAIFVGDGAEVEVADVLAKTPKALAKSKDITGGLPRVSELFEARKPKDPAVLAEIDGVVSFGKPIRGKERIIITADDGRTTEYAVDKSKHILVHHGEFVHAGESITDGIVSSHDILRISGEKELHKYIVSEVQQVYRRQGVNIADKHIEIIVSQMLRQVRIVDSGNTKFIEGDLVSKRHFKEENERTIRLGGEPAIAEPVLLGITRAAIGSDSIISAASFQETTKVLTEASIAAKIDFLEDLKENVVLGRMIPVGTGIYKNKKIRIKEKTEGA.

Residues 1 to 1377 (MPTTLKSGNR…DVTVYGETEE (1377 aa)) form a DNA-directed RNA polymerase subunit beta region. The segment at 1382-2883 (PMPIKEDDRP…IRIKEKTEGA (1502 aa)) is DNA-directed RNA polymerase subunit beta'. Zn(2+) is bound by residues Cys-1447, Cys-1449, Cys-1462, and Cys-1465. Residues Asp-1846, Asp-1848, and Asp-1850 each coordinate Mg(2+). The Zn(2+) site is built by Cys-2176, Cys-2250, Cys-2257, and Cys-2260.

It in the N-terminal section; belongs to the RNA polymerase beta chain family. This sequence in the C-terminal section; belongs to the RNA polymerase beta' chain family. As to quaternary structure, the RNAP catalytic core consists of 2 alpha, 1 beta/beta' and 1 omega subunit. When a sigma factor is associated with the core the holoenzyme is formed, which can initiate transcription. Mg(2+) serves as cofactor. Requires Zn(2+) as cofactor.

The enzyme catalyses RNA(n) + a ribonucleoside 5'-triphosphate = RNA(n+1) + diphosphate. In terms of biological role, DNA-dependent RNA polymerase catalyzes the transcription of DNA into RNA using the four ribonucleoside triphosphates as substrates. The sequence is that of Bifunctional DNA-directed RNA polymerase subunit beta-beta' (rpoBC) from Wolinella succinogenes (strain ATCC 29543 / DSM 1740 / CCUG 13145 / JCM 31913 / LMG 7466 / NCTC 11488 / FDC 602W) (Vibrio succinogenes).